The primary structure comprises 352 residues: Protein RecA (352 aa).

65 to 72 (GPESSGKT) is a binding site for ATP. A disordered region spans residues 333-352 (VKAAANREPVEEVEEADTDI). The span at 343-352 (EEVEEADTDI) shows a compositional bias: acidic residues.

It belongs to the RecA family.

It localises to the cytoplasm. Functionally, can catalyze the hydrolysis of ATP in the presence of single-stranded DNA, the ATP-dependent uptake of single-stranded DNA by duplex DNA, and the ATP-dependent hybridization of homologous single-stranded DNAs. It interacts with LexA causing its activation and leading to its autocatalytic cleavage. The sequence is that of Protein RecA from Pseudomonas fluorescens.